Reading from the N-terminus, the 848-residue chain is Dolabradiene synthase KSL4, chloroplastic (848 aa).

The N-terminal 64 residues, 1-64, are a transit peptide targeting the chloroplast; sequence MASLSFASSH…SRMPRNVDTH (64 aa). The interval 148–168 is disordered; sequence QRSDGSWGPDGGSGDHPSSPL. The Mg(2+) site is built by Asp597, Asp601, Asn742, Ser746, and Glu750. The DDXXD motif motif lies at 597 to 601; the sequence is DDLFD.

This sequence belongs to the terpene synthase family. Requires Mg(2+) as cofactor.

It localises to the plastid. The protein resides in the chloroplast. It catalyses the reaction ent-copalyl diphosphate = dolabradiene + diphosphate. Its function is as follows. Involved in the production of antifungal dolabralexin phytoalexins in response to biotic and abiotic stresses. In response to fungal infection and in associtation with AN2, is involved in the production dolabradiene, a type of antifungal phytoalexin. Converts ent-copalyl disphosphate (ent-CPP) to dolabradiene. This is Dolabradiene synthase KSL4, chloroplastic from Zea mays (Maize).